We begin with the raw amino-acid sequence, 503 residues long: Transcriptional regulator LovE (503 aa).

Positions 35–67 form a DNA-binding region, zn(2)-C6 fungal-type; that stretch reads CDRCHAQKIKCTGNKEVTGRAPCQRCQQAGLRC. Disordered stretches follow at residues 89–124 and 331–358; these read ADPD…RQFL and SHMS…HSSV. Positions 339–357 are enriched in low complexity; the sequence is SRSQSPSRDDTSSSSGHSS.

It localises to the nucleus. Transcription factor that regulates the expression of the he gene cluster that mediates the biosynthesis of lovastatin (also known as mevinolin, mevacor or monacolin K), a hypolipidemic inhibitor of (3S)-hydroxymethylglutaryl-coenzyme A (HMG-CoA) reductase (HMGR). In Aspergillus terreus, this protein is Transcriptional regulator LovE.